We begin with the raw amino-acid sequence, 115 residues long: NADH-ubiquinone oxidoreductase chain 3 (115 aa).

3 helical membrane-spanning segments follow: residues 3 to 23, 55 to 75, and 86 to 106; these read LPLALTTSITLTLLLVTIAFW, FFLVAITFLLFDLEIALLLPL, and LMLTVALVLITILAAGLAYEW.

It belongs to the complex I subunit 3 family. As to quaternary structure, core subunit of respiratory chain NADH dehydrogenase (Complex I) which is composed of 45 different subunits. Interacts with TMEM186. Interacts with TMEM242.

The protein resides in the mitochondrion inner membrane. The enzyme catalyses a ubiquinone + NADH + 5 H(+)(in) = a ubiquinol + NAD(+) + 4 H(+)(out). Functionally, core subunit of the mitochondrial membrane respiratory chain NADH dehydrogenase (Complex I) which catalyzes electron transfer from NADH through the respiratory chain, using ubiquinone as an electron acceptor. Essential for the catalytic activity of complex I. This is NADH-ubiquinone oxidoreductase chain 3 from Lemur catta (Ring-tailed lemur).